The following is a 412-amino-acid chain: CapZ-interacting protein (412 aa).

2 disordered regions span residues 1 to 84 and 99 to 412; these read MEER…KSSP and ALLP…DTRM. The segment covering 7–20 has biased composition (polar residues); it reads ETNSNVDSSAQPSV. 8 positions are modified to phosphoserine: S68, S82, S83, S105, S108, S116, S120, and S123. T124 is subject to Phosphothreonine. Phosphoserine occurs at positions 126, 127, 135, and 143. Basic residues predominate over residues 159 to 176; that stretch reads VRTRGSIKRRPPSRRFRR. Residues S177, S179, and S216 each carry the phosphoserine modification. Residues T243 and T256 each carry the phosphothreonine modification. Over residues 248–258 the composition is skewed to basic and acidic residues; it reads EKPEELVRTPE. At S297 the chain carries Phosphoserine. 2 stretches are compositionally biased toward basic and acidic residues: residues 298–312 and 319–330; these read PREE…DTGK and SEERVADEDRLG. S333 and S401 each carry phosphoserine.

Interacts with CAPZA2 and CAPZB. Dephosphorylation results in its dissociation from CAPZA2.

In terms of biological role, stress-induced phosphorylation of CAPZIP may regulate the ability of F-actin-capping protein to remodel actin filament assembly. This chain is CapZ-interacting protein (Rcsd1), found in Mus musculus (Mouse).